Reading from the N-terminus, the 227-residue chain is Protein MobD (227 aa).

The protein is Protein MobD (mobD) of Acidithiobacillus ferrooxidans (Thiobacillus ferrooxidans).